A 249-amino-acid chain; its full sequence is Ribonuclease HII (249 aa).

The span at 1–19 shows a compositional bias: pro residues; sequence MAPRPKAPPQPAEPDPALP. Positions 1–31 are disordered; it reads MAPRPKAPPQPAEPDPALPRPRGRPPKAGAV. An RNase H type-2 domain is found at 52–240; the sequence is APVAGADEVG…VREQQLGLFP (189 aa). Asp58, Glu59, and Asp149 together coordinate a divalent metal cation.

It belongs to the RNase HII family. It depends on Mn(2+) as a cofactor. Mg(2+) is required as a cofactor.

It is found in the cytoplasm. The enzyme catalyses Endonucleolytic cleavage to 5'-phosphomonoester.. In terms of biological role, endonuclease that specifically degrades the RNA of RNA-DNA hybrids. In Xanthobacter autotrophicus (strain ATCC BAA-1158 / Py2), this protein is Ribonuclease HII.